Reading from the N-terminus, the 491-residue chain is Keratin, type II microfibrillar, component 7C (491 aa).

Cysteine 1 is subject to Blocked amino end (Cys). The segment at 1-109 is head; it reads CGFSTVGSGF…PNAQCVKQEE (109 aa). Residues 109–420 enclose the IF rod domain; sequence EKEQIKCLNN…RLLEGEEQRL (312 aa). Positions 110 to 144 are coil 1A; that stretch reads KEQIKCLNNRFAAFIDKVRFLEQQNKLLETKLQFF. A linker 1 region spans residues 145–154; it reads QNRQCCESNL. The coil 1B stretch occupies residues 155 to 255; sequence EPLFEGYIET…YQEEIRVLQA (101 aa). The segment at 256–272 is linker 12; sequence NISDTSVIVKMDNSRDL. Residues 273–416 are coil 2; that stretch reads NMDCIVAEIK…ATYRRLLEGE (144 aa). The segment at 417–491 is tail; sequence EQRLCEGVGA…GGGSCSLGRC (75 aa).

The protein belongs to the intermediate filament family.

Functionally, wool microfibrillar keratin. The polypeptide is Keratin, type II microfibrillar, component 7C (Ovis aries (Sheep)).